The sequence spans 290 residues: Bifunctional protein FolD (290 aa).

Residues 169–171, Ile194, and Ile235 each bind NADP(+); that span reads GAS.

The protein belongs to the tetrahydrofolate dehydrogenase/cyclohydrolase family. Homodimer.

It carries out the reaction (6R)-5,10-methylene-5,6,7,8-tetrahydrofolate + NADP(+) = (6R)-5,10-methenyltetrahydrofolate + NADPH. The enzyme catalyses (6R)-5,10-methenyltetrahydrofolate + H2O = (6R)-10-formyltetrahydrofolate + H(+). It participates in one-carbon metabolism; tetrahydrofolate interconversion. In terms of biological role, catalyzes the oxidation of 5,10-methylenetetrahydrofolate to 5,10-methenyltetrahydrofolate and then the hydrolysis of 5,10-methenyltetrahydrofolate to 10-formyltetrahydrofolate. The sequence is that of Bifunctional protein FolD from Helicobacter pylori (strain HPAG1).